The sequence spans 901 residues: HTH-type transcriptional regulator MalT (901 aa).

39-46 (SPAGYGKT) contacts ATP. One can recognise an HTH luxR-type domain in the interval 829–894 (ELIRTSPLTQ…DAVQHAQQLL (66 aa)). The H-T-H motif DNA-binding region spans 853-872 (NEQIAGELDVAATTIKTHIR).

It belongs to the MalT family. In terms of assembly, monomer in solution. Oligomerizes to an active state in the presence of the positive effectors ATP and maltotriose.

Activated by ATP and maltotriose, which are both required for DNA binding. Functionally, positively regulates the transcription of the maltose regulon whose gene products are responsible for uptake and catabolism of malto-oligosaccharides. Specifically binds to the promoter region of its target genes, recognizing a short DNA motif called the MalT box. In Klebsiella pneumoniae subsp. pneumoniae (strain ATCC 700721 / MGH 78578), this protein is HTH-type transcriptional regulator MalT.